An 893-amino-acid chain; its full sequence is ATPase family gene 2 protein homolog A (893 aa).

The span at 1-10 (MSSKKNRKRL) shows a compositional bias: basic residues. A disordered region spans residues 1–26 (MSSKKNRKRLNQSAENGSSLPSAASS). Residues 1–237 (MSSKKNRKRL…SLELSLQLSQ (237 aa)) form a required for interaction with AFG2B and CINP region. The segment covering 11-25 (NQSAENGSSLPSAAS) has biased composition (polar residues). A Phosphothreonine modification is found at T272. 2 positions are modified to phosphoserine: S274 and S279. Residues 394–401 (GPPGTGKT) and 668–675 (GPPGCSKT) each bind ATP. K859 participates in a covalent cross-link: Glycyl lysine isopeptide (Lys-Gly) (interchain with G-Cter in SUMO2).

The protein belongs to the AAA ATPase family. AFG2 subfamily. Part of the 55LCC heterohexameric ATPase complex composed at least of AIRIM, AFG2A, AFG2B and CINP. Associates with pre-60S ribosomal particles.

Its subcellular location is the cytoplasm. The protein resides in the mitochondrion. The protein localises to the cytoskeleton. It is found in the spindle. It catalyses the reaction ATP + H2O = ADP + phosphate + H(+). AFG2A alone display limited ATPase activity and is not regulated by RNA or DNA binding. In the context of 55LCC heterohexameric ATPase complex, the ATPase activity increases and is stimulated by DNA binding and inhibited in presence of RNA. In terms of biological role, ATP-dependent chaperone part of the 55LCC heterohexameric ATPase complex which is chromatin-associated and promotes replisome proteostasis to maintain replication fork progression and genome stability. Required for replication fork progression, sister chromatid cohesion, and chromosome stability. The ATPase activity is specifically enhanced by replication fork DNA and is coupled to cysteine protease-dependent cleavage of replisome substrates in response to replication fork damage. Uses ATPase activity to process replisome substrates in S-phase, facilitating their proteolytic turnover from chromatin to ensure DNA replication and mitotic fidelity. Plays an essential role in the cytoplasmic maturation steps of pre-60S ribosomal particles by promoting the release of shuttling protein RSL24D1/RLP24 from the pre-ribosomal particles. May be involved in morphological and functional mitochondrial transformations during spermatogenesis. This Homo sapiens (Human) protein is ATPase family gene 2 protein homolog A.